A 249-amino-acid chain; its full sequence is Enolase-phosphatase E1 (249 aa).

2 residues coordinate Mg(2+): D9 and E11. Substrate contacts are provided by residues 137–138 (SS) and K177. Residue D204 participates in Mg(2+) binding.

It belongs to the HAD-like hydrolase superfamily. MasA/MtnC family. Monomer. Mg(2+) serves as cofactor.

It is found in the cytoplasm. The protein localises to the nucleus. The enzyme catalyses 5-methylsulfanyl-2,3-dioxopentyl phosphate + H2O = 1,2-dihydroxy-5-(methylsulfanyl)pent-1-en-3-one + phosphate. It functions in the pathway amino-acid biosynthesis; L-methionine biosynthesis via salvage pathway; L-methionine from S-methyl-5-thio-alpha-D-ribose 1-phosphate: step 3/6. Its pathway is amino-acid biosynthesis; L-methionine biosynthesis via salvage pathway; L-methionine from S-methyl-5-thio-alpha-D-ribose 1-phosphate: step 4/6. Bifunctional enzyme that catalyzes the enolization of 2,3-diketo-5-methylthiopentyl-1-phosphate (DK-MTP-1-P) into the intermediate 2-hydroxy-3-keto-5-methylthiopentenyl-1-phosphate (HK-MTPenyl-1-P), which is then dephosphorylated to form the acireductone 1,2-dihydroxy-3-keto-5-methylthiopentene (DHK-MTPene). The polypeptide is Enolase-phosphatase E1 (Lodderomyces elongisporus (strain ATCC 11503 / CBS 2605 / JCM 1781 / NBRC 1676 / NRRL YB-4239) (Yeast)).